Consider the following 367-residue polypeptide: GTP cyclohydrolase FolE2 (367 aa).

It belongs to the GTP cyclohydrolase IV family.

The catalysed reaction is GTP + H2O = 7,8-dihydroneopterin 3'-triphosphate + formate + H(+). The protein operates within cofactor biosynthesis; 7,8-dihydroneopterin triphosphate biosynthesis; 7,8-dihydroneopterin triphosphate from GTP: step 1/1. Functionally, converts GTP to 7,8-dihydroneopterin triphosphate. This Ruegeria sp. (strain TM1040) (Silicibacter sp.) protein is GTP cyclohydrolase FolE2.